We begin with the raw amino-acid sequence, 485 residues long: G2/mitotic-specific cyclin-A1 (485 aa).

Residues 1–24 (MRSALSLKPSNGNAAKSQAVNNKN) form a disordered region. Polar residues predominate over residues 8 to 24 (KPSNGNAAKSQAVNNKN).

Belongs to the cyclin family. Cyclin AB subfamily. Expressed in the cell lineages ABarp, C and E as well as the NSM neuroblasts.

Its function is as follows. Involved in the control of the cell cycle after S phase. May bind to and activate cdk-1 and/or cdk-2 to promote cell cycle progression. Necessary for embryogenesis. The sequence is that of G2/mitotic-specific cyclin-A1 (cya-1) from Caenorhabditis elegans.